We begin with the raw amino-acid sequence, 281 residues long: Probable endonuclease 4 (281 aa).

Residues His68, His108, Glu145, Asp179, His182, His216, Asp229, His231, and Glu261 each contribute to the Zn(2+) site.

Belongs to the AP endonuclease 2 family. Zn(2+) is required as a cofactor.

The catalysed reaction is Endonucleolytic cleavage to 5'-phosphooligonucleotide end-products.. In terms of biological role, endonuclease IV plays a role in DNA repair. It cleaves phosphodiester bonds at apurinic or apyrimidinic (AP) sites, generating a 3'-hydroxyl group and a 5'-terminal sugar phosphate. In Trichlorobacter lovleyi (strain ATCC BAA-1151 / DSM 17278 / SZ) (Geobacter lovleyi), this protein is Probable endonuclease 4.